The sequence spans 496 residues: MVEADHPGKLFIGGLNRETNEKMLKAVFGKHGPISEVLLIKDRTSKSRGFAFITFENPADAKNAAKDMNGKSLHGKAIKVEQAKKPSFQSGGRRRPPASSRNRSPSGSLRSARGSRGGTRGWLPSQEGHLDDGGYTPDLKMSYSRGLIPVKRGPSSRSGGPPPKKSAPSAVARSNSWMGSQGPMSQRRENYGVPPRRATISSWRNDRMSTRHDGYATNDGNHPSCQETRDYAPPSRGYAYRDNGHSNRDEHSSRGYRNHRSSRETRDYAPPSRGHAYRDYGHSRRDESYSRGYRNRRSSRETREYAPPSRGHGYRDYGHSRRHESYSRGYRNHPSSRETRDYAPPHRDYAYRDYGHSSWDEHSSRGYSYHDGYGEALGRDHSEHLSGSSYRDALQRYGTSHGAPPARGPRMSYGGSTCHAYSNTRDRYGRSWESYSSCGDFHYCDREHVCRKDQRNPPSLGRVLPDPREACGSSSYVASIVDGGESRSEKGDSSRY.

The region spanning 8–85 (GKLFIGGLNR…KAIKVEQAKK (78 aa)) is the RRM domain. Disordered regions lie at residues 67-349 (DMNG…HRDY) and 452-496 (KDQR…SSRY). 2 stretches are compositionally biased toward low complexity: residues 97 to 114 (PASSRNRSPSGSLRSARG) and 149 to 159 (PVKRGPSSRSG). Polar residues predominate over residues 175–184 (NSWMGSQGPM). Composition is skewed to basic and acidic residues over residues 204–214 (RNDRMSTRHDG), 242–253 (DNGHSNRDEHSS), 276–289 (AYRDYGHSRRDESY), 313–326 (GYRDYGHSRRHESY), 335–349 (SSRETRDYAPPHRDY), and 484–496 (GESRSEKGDSSRY).

As to quaternary structure, interacts with splicing factor proteins SFRS3/SRP20, TRA2B/SFRS10, KHDRBS1/SAM68 and KHDRBS3. In terms of tissue distribution, testis-specific.

Its subcellular location is the nucleus. Its function is as follows. RNA-binding protein which may be involved in spermatogenesis. Required for sperm development, possibly by participating in pre-mRNA splicing in the testis. This is RNA-binding motif protein, Y chromosome, family 1 member D (RBMY1D) from Homo sapiens (Human).